A 263-amino-acid chain; its full sequence is Type II restriction enzyme TaqI (263 aa).

Only 15% of purified enzyme (upon expression in E.coli) can be sequenced, suggesting the remainder has a blocked N-terminus.

It carries out the reaction Endonucleolytic cleavage of DNA to give specific double-stranded fragments with terminal 5'-phosphates.. Functionally, a P subtype restriction enzyme that recognizes the double-stranded sequence 5'-TCGA-3' and cleaves after T-1. This is Type II restriction enzyme TaqI (taqIR) from Thermus aquaticus.